Consider the following 93-residue polypeptide: Alpha-defensin 7 (93 aa).

A signal peptide spans 1 to 19 (MKTLILLSALVLLAFQVQA). A propeptide spanning residues 20 to 58 (DPIQNTDEETKTEEQPGEDDQAVSVSFGDPEGSSLQEES) is cleaved from the precursor. A disordered region spans residues 22-56 (IQNTDEETKTEEQPGEDDQAVSVSFGDPEGSSLQE). 3 disulfides stabilise this stretch: Cys64–Cys92, Cys66–Cys81, and Cys71–Cys91.

The protein belongs to the alpha-defensin family. Paneth cells of the small bowel.

It localises to the secreted. Functionally, probably contributes to the antimicrobial barrier function of the small bowel mucosa. In Mus musculus (Mouse), this protein is Alpha-defensin 7 (Defa7).